The following is a 534-amino-acid chain: Peptide chain release factor 3 (534 aa).

The region spanning 9-278 (ARRRTFAIIS…FFIEHAPPPQ (270 aa)) is the tr-type G domain. GTP is bound by residues 18-25 (SHPDAGKT), 86-90 (DTPGH), and 140-143 (NKLD).

This sequence belongs to the TRAFAC class translation factor GTPase superfamily. Classic translation factor GTPase family. PrfC subfamily.

The protein resides in the cytoplasm. Functionally, increases the formation of ribosomal termination complexes and stimulates activities of RF-1 and RF-2. It binds guanine nucleotides and has strong preference for UGA stop codons. It may interact directly with the ribosome. The stimulation of RF-1 and RF-2 is significantly reduced by GTP and GDP, but not by GMP. This chain is Peptide chain release factor 3, found in Xanthomonas oryzae pv. oryzae (strain MAFF 311018).